A 673-amino-acid chain; its full sequence is DNA ligase (673 aa).

Residues 33–37, 82–83, and Glu-114 each bind NAD(+); these read DAEYD and SL. The N6-AMP-lysine intermediate role is filled by Lys-116. Residues Arg-137, Glu-174, Lys-291, and Lys-315 each coordinate NAD(+). Zn(2+) contacts are provided by Cys-409, Cys-412, Cys-427, and Cys-433. The 82-residue stretch at 592 to 673 folds into the BRCT domain; sequence AQEQPLAGLV…LINLLEQHNG (82 aa).

The protein belongs to the NAD-dependent DNA ligase family. LigA subfamily. Requires Mg(2+) as cofactor. It depends on Mn(2+) as a cofactor.

The catalysed reaction is NAD(+) + (deoxyribonucleotide)n-3'-hydroxyl + 5'-phospho-(deoxyribonucleotide)m = (deoxyribonucleotide)n+m + AMP + beta-nicotinamide D-nucleotide.. Its function is as follows. DNA ligase that catalyzes the formation of phosphodiester linkages between 5'-phosphoryl and 3'-hydroxyl groups in double-stranded DNA using NAD as a coenzyme and as the energy source for the reaction. It is essential for DNA replication and repair of damaged DNA. The polypeptide is DNA ligase (Pseudoalteromonas translucida (strain TAC 125)).